Here is a 368-residue protein sequence, read N- to C-terminus: 3-isopropylmalate dehydrogenase (368 aa).

79–91 (GPEWGTSSTVRPE) serves as a coordination point for NAD(+). 4 residues coordinate substrate: arginine 98, arginine 108, arginine 137, and aspartate 226. Mg(2+)-binding residues include aspartate 226, aspartate 251, and aspartate 255. An NAD(+)-binding site is contributed by 291–303 (GSAPDISGKGIVN).

The protein belongs to the isocitrate and isopropylmalate dehydrogenases family. Homodimer. It depends on Mg(2+) as a cofactor. The cofactor is Mn(2+).

The protein resides in the cytoplasm. It catalyses the reaction (2R,3S)-3-isopropylmalate + NAD(+) = 4-methyl-2-oxopentanoate + CO2 + NADH. Its pathway is amino-acid biosynthesis; L-leucine biosynthesis; L-leucine from 3-methyl-2-oxobutanoate: step 3/4. In terms of biological role, catalyzes the oxidation of 3-carboxy-2-hydroxy-4-methylpentanoate (3-isopropylmalate) to 3-carboxy-4-methyl-2-oxopentanoate. The product decarboxylates to 4-methyl-2 oxopentanoate. The polypeptide is 3-isopropylmalate dehydrogenase (LEU1) (Sordaria macrospora).